Reading from the N-terminus, the 77-residue chain is Conotoxin Vc6c (77 aa).

The signal sequence occupies residues 1–22 (MKLTCMVIVAVLFLTANTFVTA). A propeptide spanning residues 23–51 (DDSGNGLENLFSKAHHEIKNPEASNLNKR) is cleaved from the precursor. 3 cysteine pairs are disulfide-bonded: cysteine 52/cysteine 67, cysteine 59/cysteine 71, and cysteine 66/cysteine 76.

Expressed by the venom duct.

The protein localises to the secreted. The sequence is that of Conotoxin Vc6c from Conus victoriae (Queen Victoria cone).